A 393-amino-acid chain; its full sequence is S-adenosylmethionine synthase (393 aa).

An ATP-binding site is contributed by H16. D18 provides a ligand contact to Mg(2+). E44 serves as a coordination point for K(+). E57 and Q100 together coordinate L-methionine. The flexible loop stretch occupies residues 100-110; it reads QSNDIAQGVDQ. Residues 167–169, 238–239, D247, 253–254, A270, and K274 contribute to the ATP site; these read DAK, RF, and RK. D247 is an L-methionine binding site. Residue K278 coordinates L-methionine.

Belongs to the AdoMet synthase family. As to quaternary structure, homotetramer; dimer of dimers. Mg(2+) is required as a cofactor. K(+) serves as cofactor.

Its subcellular location is the cytoplasm. The enzyme catalyses L-methionine + ATP + H2O = S-adenosyl-L-methionine + phosphate + diphosphate. The protein operates within amino-acid biosynthesis; S-adenosyl-L-methionine biosynthesis; S-adenosyl-L-methionine from L-methionine: step 1/1. Catalyzes the formation of S-adenosylmethionine (AdoMet) from methionine and ATP. The overall synthetic reaction is composed of two sequential steps, AdoMet formation and the subsequent tripolyphosphate hydrolysis which occurs prior to release of AdoMet from the enzyme. The protein is S-adenosylmethionine synthase of Methylibium petroleiphilum (strain ATCC BAA-1232 / LMG 22953 / PM1).